Here is a 492-residue protein sequence, read N- to C-terminus: MIGVIDAGTTTIKLAVYDEDKLVAIKKEPVVKHNPKPGWVEIDAEDLARKCVSFADTAIDEYGVEVIAITNQRTTAVLWDGKTGRPVFNALGWQDMRANALAEEMNRDSTIRMARTAGMIARGVVKLLPTLKNKRRVKWLITLSRLSIRPNHTSVKLCWMLRELGEKKEKYDLKAGTVDSWLVYRLTGEHLTDYSNAAATGLYDSYYLRWSEPILKIVGADEEMLPKTLESDRIFGEYRNVPVTGVIADQSASLYALGCWEEGDIKATNGTGTFVDLNVGEEPQASPGGLLPLIAWKLKSEMRYMMEGMLFYSGSAVEKLKEIGIYDDVSKTSEMAFRSKNDDMLLIPSFTGLATPHYVSVPGLLYGISNAMTREDIVKALLESIAFRIAEIVEIMRKEFPYETDRIRCDGEMSSNDFFLQRIADVTGLKVERGAVLSGTSFGAHLVAGRALGKWKKDFCMPFDKVFEPSLDLSEKYRRWKRLLEISKKLKV.

It belongs to the FGGY kinase family.

This is an uncharacterized protein from Archaeoglobus fulgidus (strain ATCC 49558 / DSM 4304 / JCM 9628 / NBRC 100126 / VC-16).